Here is a 103-residue protein sequence, read N- to C-terminus: Acylphosphatase-2 (103 aa).

The residue at position 2 (Ser-2) is an N-acetylserine. An Acylphosphatase-like domain is found at 13–103; sequence SVDYEVFGRV…LDFSGFSTRY (91 aa). Residues Arg-28 and Asn-46 contribute to the active site.

It belongs to the acylphosphatase family.

The catalysed reaction is an acyl phosphate + H2O = a carboxylate + phosphate + H(+). Functionally, its physiological role is not yet clear. The chain is Acylphosphatase-2 (ACYP2) from Anas platyrhynchos (Mallard).